The following is a 426-amino-acid chain: UPF0164 protein TP_0548 (426 aa).

The N-terminal stretch at 1–37 is a signal peptide; sequence MISCSVRRRPRWEPQVGAAFLAFALLPVLASGRGMQA.

The protein belongs to the UPF0164 family.

In Treponema pallidum (strain Nichols), this protein is UPF0164 protein TP_0548.